We begin with the raw amino-acid sequence, 259 residues long: Deoxyribose-phosphate aldolase (259 aa).

Catalysis depends on D102, which acts as the Proton donor/acceptor. The active-site Schiff-base intermediate with acetaldehyde is the K166. The Proton donor/acceptor role is filled by K200.

This sequence belongs to the DeoC/FbaB aldolase family. DeoC type 2 subfamily.

It is found in the cytoplasm. It carries out the reaction 2-deoxy-D-ribose 5-phosphate = D-glyceraldehyde 3-phosphate + acetaldehyde. It participates in carbohydrate degradation; 2-deoxy-D-ribose 1-phosphate degradation; D-glyceraldehyde 3-phosphate and acetaldehyde from 2-deoxy-alpha-D-ribose 1-phosphate: step 2/2. Catalyzes a reversible aldol reaction between acetaldehyde and D-glyceraldehyde 3-phosphate to generate 2-deoxy-D-ribose 5-phosphate. This chain is Deoxyribose-phosphate aldolase, found in Vibrio cholerae serotype O1 (strain ATCC 39315 / El Tor Inaba N16961).